The chain runs to 267 residues: Membrane-spanning 4-domains subfamily A member 10 (267 aa).

Over 1–56 the chain is Cytoplasmic; the sequence is MAGQAPTAVPGSVTGEVSRWQNLGPAQPAQKVAQPQNLVPDGHLEKALEGSDLLQK. The chain crosses the membrane as a helical span at residues 57–77; the sequence is LGGFHIAIAFAHLAFGGYLIS. At 78–83 the chain is on the extracellular side; it reads TVKNLH. The chain crosses the membrane as a helical span at residues 84 to 104; sequence LVVLKCWYPLWGTVSFLVAGM. At 105–118 the chain is on the cytoplasmic side; it reads AAMTTVTFPKTSLK. A helical transmembrane segment spans residues 119 to 139; that stretch reads VLCVIANVISLFCALAGFFVI. The Extracellular segment spans residues 140-168; it reads AKDLFLEGPFPWPIWRPYPEPTTYIQRLE. Residues 169-189 traverse the membrane as a helical segment; that stretch reads LTLFCFTFLEIFLSGSTAITA. The Cytoplasmic segment spans residues 190–267; it reads YRMKRLQAED…LHTGPRTLRK (78 aa).

It belongs to the MS4A family. In terms of tissue distribution, expressed in thymus, kidney, colon, brain and testis. Expressed also by various hematopoietic and lymphoblastoid cell lines.

The protein resides in the membrane. Its function is as follows. May be involved in signal transduction as a component of a multimeric receptor complex. This is Membrane-spanning 4-domains subfamily A member 10 (Ms4a10) from Mus musculus (Mouse).